A 931-amino-acid chain; its full sequence is Protocadherin gamma-B2 (931 aa).

The first 30 residues, 1–30, serve as a signal peptide directing secretion; that stretch reads MKASSGRCGLVRWLQVLLPFLLSLFPGALP. 6 consecutive Cadherin domains span residues 31–133, 134–242, 243–347, 348–452, 453–562, and 570–675; these read VQIR…TPLF, KQTK…PPVF, SQDV…APEV, IVTS…APVF, QQTS…APRV, and DGSA…LPDL. Residues 31-691 lie on the Extracellular side of the membrane; it reads VQIRYSIPEE…SDPQAELQFY (661 aa). 2 N-linked (GlcNAc...) asparagine glycosylation sites follow: N419 and N545. Residues 692–712 traverse the membrane as a helical segment; sequence LVVALALISVLFFLAVILAIS. Residues 713 to 931 lie on the Cytoplasmic side of the membrane; the sequence is LRLRRSSRSD…KKKSGKKEKK (219 aa). Disordered stretches follow at residues 814–840 and 901–931; these read DWRF…WPNN and ATLT…KEKK. Positions 815-840 are enriched in polar residues; that stretch reads WRFSQAQRPGTSGSQNGDDTGTWPNN. Basic residues predominate over residues 921–931; that stretch reads NKKKSGKKEKK.

The protein localises to the cell membrane. Functionally, potential calcium-dependent cell-adhesion protein. May be involved in the establishment and maintenance of specific neuronal connections in the brain. The sequence is that of Protocadherin gamma-B2 (PCDHGB2) from Pan troglodytes (Chimpanzee).